The sequence spans 28 residues: uncharacterized protein (28 aa).

This is an uncharacterized protein from Escherichia coli (Bacteriophage T4).